The sequence spans 280 residues: Large ribosomal subunit protein uL2 (280 aa).

Disordered regions lie at residues 1-25 (MGIRKYRPMTPGTRQRSGADFAEVT) and 230-280 (HPHG…SGRG). Positions 257-280 (KTRKRRKPSSKFIIRRRKTASGRG) are enriched in basic residues.

This sequence belongs to the universal ribosomal protein uL2 family. Part of the 50S ribosomal subunit. Forms a bridge to the 30S subunit in the 70S ribosome.

One of the primary rRNA binding proteins. Required for association of the 30S and 50S subunits to form the 70S ribosome, for tRNA binding and peptide bond formation. It has been suggested to have peptidyltransferase activity; this is somewhat controversial. Makes several contacts with the 16S rRNA in the 70S ribosome. In Gloeobacter violaceus (strain ATCC 29082 / PCC 7421), this protein is Large ribosomal subunit protein uL2.